The following is a 203-amino-acid chain: High frequency lysogenization protein HflD homolog (203 aa).

It belongs to the HflD family.

Its subcellular location is the cytoplasm. It is found in the cell inner membrane. This Histophilus somni (strain 2336) (Haemophilus somnus) protein is High frequency lysogenization protein HflD homolog.